The sequence spans 167 residues: Leptin (167 aa).

A signal peptide spans Met1–Ala21. An intrachain disulfide couples Cys117 to Cys167.

This sequence belongs to the leptin family.

The protein localises to the secreted. In terms of biological role, key player in the regulation of energy balance and body weight control. Once released into the circulation, has central and peripheral effects by binding LEPR, found in many tissues, which results in the activation of several major signaling pathways. In the hypothalamus, acts as an appetite-regulating factor that induces a decrease in food intake and an increase in energy consumption by inducing anorexinogenic factors and suppressing orexigenic neuropeptides, also regulates bone mass and secretion of hypothalamo-pituitary-adrenal hormones. In the periphery, increases basal metabolism, influences reproductive function, regulates pancreatic beta-cell function and insulin secretion, is pro-angiogenic for endothelial cell and affects innate and adaptive immunity. In the arcuate nucleus of the hypothalamus, activates by depolarization POMC neurons inducing FOS and SOCS3 expression to release anorexigenic peptides and inhibits by hyperpolarization NPY neurons inducing SOCS3 with a consequent reduction on release of orexigenic peptides. In addition to its known satiety inducing effect, has a modulatory role in nutrient absorption. In the intestine, reduces glucose absorption by enterocytes by activating PKC and leading to a sequential activation of p38, PI3K and ERK signaling pathways which exerts an inhibitory effect on glucose absorption. Acts as a growth factor on certain tissues, through the activation of different signaling pathways increases expression of genes involved in cell cycle regulation such as CCND1, via JAK2-STAT3 pathway, or VEGFA, via MAPK1/3 and PI3K-AKT1 pathways. May also play an apoptotic role via JAK2-STAT3 pathway and up-regulation of BIRC5 expression. Pro-angiogenic, has mitogenic activity on vascular endothelial cells and plays a role in matrix remodeling by regulating the expression of matrix metalloproteinases (MMPs) and tissue inhibitors of metalloproteinases (TIMPs). In innate immunity, modulates the activity and function of neutrophils by increasing chemotaxis and the secretion of oxygen radicals. Increases phagocytosis by macrophages and enhances secretion of pro-inflammatory mediators. Increases cytotoxic ability of NK cells. Plays a pro-inflammatory role, in synergy with IL1B, by inducing NOS2 which promotes the production of IL6, IL8 and Prostaglandin E2, through a signaling pathway that involves JAK2, PI3K, MAP2K1/MEK1 and MAPK14/p38. In adaptive immunity, promotes the switch of memory T-cells towards T helper-1 cell immune responses. Increases CD4(+)CD25(-) T cells proliferation and reduces autophagy during TCR (T cell receptor) stimulation, through MTOR signaling pathway activation and BCL2 up-regulation. The polypeptide is Leptin (Lep) (Mus musculus (Mouse)).